Consider the following 324-residue polypeptide: Phospho-N-acetylmuramoyl-pentapeptide-transferase (324 aa).

9 helical membrane-spanning segments follow: residues 13-33 (VLSA…IFIP), 59-79 (PTMG…IIGY), 85-105 (GMVV…DDIL), 121-141 (MILL…NIGT), 143-163 (IIIP…PLVV), 179-199 (IDGL…IVGF), 201-221 (TGHY…LGFL), 243-263 (AIAT…VGGI), and 303-323 (VKLV…GFIA).

This sequence belongs to the glycosyltransferase 4 family. MraY subfamily. It depends on Mg(2+) as a cofactor.

Its subcellular location is the cell membrane. It catalyses the reaction UDP-N-acetyl-alpha-D-muramoyl-L-alanyl-gamma-D-glutamyl-meso-2,6-diaminopimeloyl-D-alanyl-D-alanine + di-trans,octa-cis-undecaprenyl phosphate = di-trans,octa-cis-undecaprenyl diphospho-N-acetyl-alpha-D-muramoyl-L-alanyl-D-glutamyl-meso-2,6-diaminopimeloyl-D-alanyl-D-alanine + UMP. Its pathway is cell wall biogenesis; peptidoglycan biosynthesis. Catalyzes the initial step of the lipid cycle reactions in the biosynthesis of the cell wall peptidoglycan: transfers peptidoglycan precursor phospho-MurNAc-pentapeptide from UDP-MurNAc-pentapeptide onto the lipid carrier undecaprenyl phosphate, yielding undecaprenyl-pyrophosphoryl-MurNAc-pentapeptide, known as lipid I. The chain is Phospho-N-acetylmuramoyl-pentapeptide-transferase from Clostridium botulinum (strain Alaska E43 / Type E3).